The chain runs to 229 residues: Ribonuclease 3 (229 aa).

An RNase III domain is found at 5–127 (LARLERKLGY…LIGAIYLDAD (123 aa)). Glu-40 lines the Mg(2+) pocket. Asp-44 is a catalytic residue. The Mg(2+) site is built by Asp-113 and Glu-116. The active site involves Glu-116. In terms of domain architecture, DRBM spans 154–224 (DPKTRLQEFL…AAAALIALGV (71 aa)).

It belongs to the ribonuclease III family. As to quaternary structure, homodimer. The cofactor is Mg(2+).

The protein resides in the cytoplasm. The enzyme catalyses Endonucleolytic cleavage to 5'-phosphomonoester.. In terms of biological role, digests double-stranded RNA. Involved in the processing of primary rRNA transcript to yield the immediate precursors to the large and small rRNAs (23S and 16S). Processes some mRNAs, and tRNAs when they are encoded in the rRNA operon. Processes pre-crRNA and tracrRNA of type II CRISPR loci if present in the organism. The protein is Ribonuclease 3 of Pseudomonas putida (strain W619).